The following is a 445-amino-acid chain: 3-dehydroquinate synthase, chloroplastic (445 aa).

A chloroplast-targeting transit peptide spans 1–68; the sequence is MAAFSLSAKQ…RASASSTAPV (68 aa). NAD(+)-binding positions include Asn-122, 153–155, Lys-158, 186–191, 211–212, Lys-224, Lys-233, and 251–254; these read DGE, GGVIGD, TT, and TLNT. Glu-266 is an a divalent metal cation binding site. Lys-308 serves as a coordination point for NAD(+). Residues His-329 and His-346 each contribute to the a divalent metal cation site.

This sequence belongs to the sugar phosphate cyclases superfamily. Dehydroquinate synthase family. As to quaternary structure, homodimer. A divalent metal cation serves as cofactor. It depends on NAD(+) as a cofactor.

The protein resides in the plastid. The protein localises to the chloroplast. It carries out the reaction 7-phospho-2-dehydro-3-deoxy-D-arabino-heptonate = 3-dehydroquinate + phosphate. Its pathway is metabolic intermediate biosynthesis; chorismate biosynthesis; chorismate from D-erythrose 4-phosphate and phosphoenolpyruvate: step 2/7. Its function is as follows. Catalyzes the second step in the shikimate pathway. The sequence is that of 3-dehydroquinate synthase, chloroplastic (DHQS) from Actinidia chinensis var. chinensis (Chinese soft-hair kiwi).